Here is a 41-residue protein sequence, read N- to C-terminus: Large ribosomal subunit protein bL36 (41 aa).

The protein belongs to the bacterial ribosomal protein bL36 family.

This is Large ribosomal subunit protein bL36 from Rhizobium etli (strain CIAT 652).